Consider the following 237-residue polypeptide: Ribonuclease PH (237 aa).

Residues R86 and 124–126 (GTR) each bind phosphate.

Belongs to the RNase PH family. Homohexameric ring arranged as a trimer of dimers.

It carries out the reaction tRNA(n+1) + phosphate = tRNA(n) + a ribonucleoside 5'-diphosphate. Its function is as follows. Phosphorolytic 3'-5' exoribonuclease that plays an important role in tRNA 3'-end maturation. Removes nucleotide residues following the 3'-CCA terminus of tRNAs; can also add nucleotides to the ends of RNA molecules by using nucleoside diphosphates as substrates, but this may not be physiologically important. Probably plays a role in initiation of 16S rRNA degradation (leading to ribosome degradation) during starvation. In Methylocella silvestris (strain DSM 15510 / CIP 108128 / LMG 27833 / NCIMB 13906 / BL2), this protein is Ribonuclease PH.